A 414-amino-acid chain; its full sequence is Tryptophan synthase beta chain (414 aa).

Residues 1 to 12 (MVSTISRHDQNK) show a composition bias toward basic and acidic residues. The disordered stretch occupies residues 1–23 (MVSTISRHDQNKNNDYLNQPSKE). K109 is modified (N6-(pyridoxal phosphate)lysine).

Belongs to the TrpB family. As to quaternary structure, tetramer of two alpha and two beta chains. Requires pyridoxal 5'-phosphate as cofactor.

The catalysed reaction is (1S,2R)-1-C-(indol-3-yl)glycerol 3-phosphate + L-serine = D-glyceraldehyde 3-phosphate + L-tryptophan + H2O. Its pathway is amino-acid biosynthesis; L-tryptophan biosynthesis; L-tryptophan from chorismate: step 5/5. In terms of biological role, the beta subunit is responsible for the synthesis of L-tryptophan from indole and L-serine. The chain is Tryptophan synthase beta chain from Prochlorococcus marinus (strain MIT 9515).